The following is a 486-amino-acid chain: Cardiolipin synthase A (486 aa).

Transmembrane regions (helical) follow at residues 3-23 (TVYT…IAGV) and 38-58 (MAWL…YLAV). PLD phosphodiesterase domains lie at 219–246 (MDLR…VDPR) and 399–426 (EGGL…DMRS). Catalysis depends on residues His-224, Lys-226, Asp-231, His-404, Lys-406, and Asp-411.

It belongs to the phospholipase D family. Cardiolipin synthase subfamily. ClsA sub-subfamily.

The protein resides in the cell inner membrane. The catalysed reaction is 2 a 1,2-diacyl-sn-glycero-3-phospho-(1'-sn-glycerol) = a cardiolipin + glycerol. Catalyzes the reversible phosphatidyl group transfer from one phosphatidylglycerol molecule to another to form cardiolipin (CL) (diphosphatidylglycerol) and glycerol. The sequence is that of Cardiolipin synthase A from Escherichia coli O7:K1 (strain IAI39 / ExPEC).